The chain runs to 267 residues: Acryloyl-CoA reductase electron transfer subunit gamma (267 aa).

Heterohexadecamer; tetramer of tetramers. Each tetramer is composed of 2 alpha (AcrC), a beta (AcrA) and a gamma (AcrB) subunit.

It localises to the cytoplasm. Functionally, part of the ETF-acryloyl-CoA reductase complex involved in the pathway of L-alanine fermentation. The electron transfer flavoprotein (ETF) serves as a specific electron acceptor for acryloyl-CoA reductase. In Anaerotignum propionicum (Clostridium propionicum), this protein is Acryloyl-CoA reductase electron transfer subunit gamma (acrB).